Consider the following 294-residue polypeptide: 33 kDa chaperonin (294 aa).

2 disulfide bridges follow: Cys-239-Cys-241 and Cys-272-Cys-275.

This sequence belongs to the HSP33 family. In terms of processing, under oxidizing conditions two disulfide bonds are formed involving the reactive cysteines. Under reducing conditions zinc is bound to the reactive cysteines and the protein is inactive.

The protein resides in the cytoplasm. Redox regulated molecular chaperone. Protects both thermally unfolding and oxidatively damaged proteins from irreversible aggregation. Plays an important role in the bacterial defense system toward oxidative stress. This Listeria monocytogenes serotype 4b (strain CLIP80459) protein is 33 kDa chaperonin.